The sequence spans 378 residues: O-methyltransferase dpfgI (378 aa).

S-adenosyl-L-methionine contacts are provided by residues 232–233 (GG), aspartate 257, 279–280 (NF), and arginine 295. The Proton acceptor role is filled by histidine 299.

This sequence belongs to the class I-like SAM-binding methyltransferase superfamily. Cation-independent O-methyltransferase family.

It functions in the pathway secondary metabolite biosynthesis; terpenoid biosynthesis. Its function is as follows. O-methyltransferase; part of the gene cluster that mediates the biosynthesis of diterpenoid pyrones. The first step of the pathway is the synthesis of the alpha-pyrone moiety by the polyketide synthase dpfgA via condensation of one acetyl-CoA starter unit with 3 malonyl-CoA units and 2 methylations. The alpha-pyrone is then combined with geranylgeranyl pyrophosphate (GGPP) formed by the GGPP synthase dpfgD through the action of the prenyltransferase dpfgC to yield a linear alpha-pyrone diterpenoid. Subsequent steps in the diterpenoid pyrone biosynthetic pathway involve the decalin core formation, which is initiated by the epoxidation of the C10-C11 olefin by the FAD-dependent oxidoreductase dpfgE, and is followed by a cyclization cascade catalyzed by the terpene cyclase dpfgB. The short chain dehydrogenase/reductase dpfgG then oxidizes the 8S hydroxy group to a ketone and the short chain dehydrogenase/reductase dpfgH reduces the ketone to the 8R hydroxy group to yield higginsianin B. Higginsianin B is further methylated by the methyltransferase dpfgI to produce the intermediate named FDDP B. The cytochrome P450 monooxygenase dfgpJ then catalyzes a three-step oxidation at C-27 to generate a carboxylic acid as well as C-26 hydroxylation. Finally, methyltransferase dpfgK methylates the carboxylic acid generated by dpfgJ, yielding the final diterpenoid pyrones from the pathway which were named FDDP D and FDDP E. This chain is O-methyltransferase dpfgI, found in Gibberella zeae (strain ATCC MYA-4620 / CBS 123657 / FGSC 9075 / NRRL 31084 / PH-1) (Wheat head blight fungus).